Consider the following 929-residue polypeptide: Leucine--tRNA ligase (929 aa).

A 'HIGH' region motif is present at residues 42 to 52; sequence PYPSGNLHMGH. The 'KMSKS' region motif lies at 614–618; that stretch reads KMSKS. Lys-617 lines the ATP pocket.

Belongs to the class-I aminoacyl-tRNA synthetase family.

It is found in the cytoplasm. It catalyses the reaction tRNA(Leu) + L-leucine + ATP = L-leucyl-tRNA(Leu) + AMP + diphosphate. The polypeptide is Leucine--tRNA ligase (Trichodesmium erythraeum (strain IMS101)).